The chain runs to 567 residues: Septation ring formation regulator EzrA (567 aa).

Residues 1 to 2 (MG) are Extracellular-facing. The helical transmembrane segment at 3–21 (MAWIVLLLGAGAIIYNHVY) threads the bilayer. Topologically, residues 22–567 (RKRMYREIDR…LWQEDNSREQ (546 aa)) are cytoplasmic. 2 coiled-coil regions span residues 98-159 (YRQA…AYRY) and 251-497 (HMER…IEQA).

The protein belongs to the EzrA family.

Its subcellular location is the cell membrane. Its function is as follows. Negative regulator of FtsZ ring formation; modulates the frequency and position of FtsZ ring formation. Inhibits FtsZ ring formation at polar sites. Interacts either with FtsZ or with one of its binding partners to promote depolymerization. In Geobacillus kaustophilus (strain HTA426), this protein is Septation ring formation regulator EzrA.